We begin with the raw amino-acid sequence, 359 residues long: 1-deoxy-D-xylulose 5-phosphate reductoisomerase (359 aa).

NADPH contacts are provided by T7, G8, S9, I10, G31, K32, N33, and N111. K112 contributes to the 1-deoxy-D-xylulose 5-phosphate binding site. E113 contacts NADPH. D131 is a binding site for Mn(2+). Positions 132, 133, 155, and 178 each coordinate 1-deoxy-D-xylulose 5-phosphate. E133 contributes to the Mn(2+) binding site. Residue G184 coordinates NADPH. Residues S191, N196, K197, and E200 each coordinate 1-deoxy-D-xylulose 5-phosphate. A Mn(2+)-binding site is contributed by E200.

It belongs to the DXR family. Requires Mg(2+) as cofactor. It depends on Mn(2+) as a cofactor.

The catalysed reaction is 2-C-methyl-D-erythritol 4-phosphate + NADP(+) = 1-deoxy-D-xylulose 5-phosphate + NADPH + H(+). Its pathway is isoprenoid biosynthesis; isopentenyl diphosphate biosynthesis via DXP pathway; isopentenyl diphosphate from 1-deoxy-D-xylulose 5-phosphate: step 1/6. Catalyzes the NADPH-dependent rearrangement and reduction of 1-deoxy-D-xylulose-5-phosphate (DXP) to 2-C-methyl-D-erythritol 4-phosphate (MEP). This is 1-deoxy-D-xylulose 5-phosphate reductoisomerase from Campylobacter lari (strain RM2100 / D67 / ATCC BAA-1060).